Here is a 2439-residue protein sequence, read N- to C-terminus: Centrosomal protein of 290 kDa (2439 aa).

Coiled coils occupy residues 75–913 (AEQA…VVTE) and 1271–1576 (NTML…YMDT). Disordered stretches follow at residues 1802–1824 (ETLN…EKEA), 1867–1890 (ELDR…KSSK), and 2017–2048 (ESRL…FQKE). Over residues 2039-2048 (SQREHEFQKE) the composition is skewed to basic and acidic residues. Residues 2046–2394 (QKENLRLSTE…KLTQELKHFD (349 aa)) are a coiled coil.

As to quaternary structure, part of the tectonic-like complex (also named B9 complex).

The protein localises to the cytoplasm. The protein resides in the cytoskeleton. It is found in the microtubule organizing center. It localises to the centrosome. Its subcellular location is the centriolar satellite. The protein localises to the nucleus. The protein resides in the cilium basal body. Its function is as follows. Involved in early and late steps in cilia formation. May play a role in early ciliogenesis in the disappearance of centriolar satellites and in the transition of primary ciliar vesicles (PCVs) to capped ciliary vesicles (CCVs). In the ciliary transition zone is part of the tectonic-like complex which is required for tissue-specific ciliogenesis and may regulate ciliary membrane composition. Involved in regulation of the BBSome complex integrity and in ciliary targeting of selected BBSome cargos. Required for the correct localization of ciliary and phototransduction proteins in retinal photoreceptor cells; may play a role in ciliary transport processes. Involved in development of the nervous system and kidney. This chain is Centrosomal protein of 290 kDa (cep290), found in Danio rerio (Zebrafish).